Here is a 262-residue protein sequence, read N- to C-terminus: uncharacterized protein (262 aa).

3 helical membrane passes run 4-24, 28-48, and 62-82; these read LIVFLSMLSSSVAGFFGRFLG, VSRFNLIIFLILLVFSICLFR, and CYLALVCQISLFLVLLRSHIL. Positions 152–181 form a coiled coil; that stretch reads EREARAQEHDRISAEVETITSACENLEAAM.

It localises to the mitochondrion membrane. This is an uncharacterized protein from Arabidopsis thaliana (Mouse-ear cress).